Consider the following 85-residue polypeptide: Probable oxaloacetate decarboxylase gamma chain (85 aa).

The chain crosses the membrane as a helical span at residues 15–35; it reads ISGMGFVLLFLIVLIYAISFI.

The protein belongs to the OadG family. In terms of assembly, heterotrimer of an alpha, a beta and a gamma subunit. It depends on Na(+) as a cofactor.

It localises to the cell membrane. The catalysed reaction is oxaloacetate + 2 Na(+)(in) + H(+) = pyruvate + 2 Na(+)(out) + CO2. Catalyzes the decarboxylation of oxaloacetate coupled to Na(+) translocation. In Actinobacillus pleuropneumoniae serotype 5b (strain L20), this protein is Probable oxaloacetate decarboxylase gamma chain.